A 152-amino-acid chain; its full sequence is Calcium-binding protein SPEC 1A (152 aa).

4 consecutive EF-hand domains span residues 10 to 45 (EEVT…TGKS), 46 to 81 (YTDK…QMVK), 84 to 119 (WKEE…SKPP), and 120 to 152 (MKRK…IKSC). Ca(2+)-binding residues include D23, D25, S27, S29, E34, D59, D61, S63, T65, E70, D97, D99, N101, S103, E108, D133, N135, D137, K139, and E144. The interval 95 to 121 (DMDKDGNGSLSPQELREALSASKPPMK) is disordered.

Found in cell lineages giving rise to the aboral ectoderm, a squamous epithelium covering the surface of the late stage embryo and larva.

Its function is as follows. Calcium-binding protein involved in larval development and metamorphosis. Likely to function as calcium buffers mediating the transport of calcium from the sea water to the blastocoel where calcium is required for skeleton formation. The sequence is that of Calcium-binding protein SPEC 1A (SPEC1) from Strongylocentrotus purpuratus (Purple sea urchin).